Here is a 132-residue protein sequence, read N- to C-terminus: Small ribosomal subunit protein uS11 (132 aa).

Belongs to the universal ribosomal protein uS11 family. In terms of assembly, part of the 30S ribosomal subunit.

Functionally, located on the platform of the 30S subunit. The polypeptide is Small ribosomal subunit protein uS11 (Thermoplasma volcanium (strain ATCC 51530 / DSM 4299 / JCM 9571 / NBRC 15438 / GSS1)).